The sequence spans 265 residues: DNA repair protein RecO (265 aa).

Belongs to the RecO family.

In terms of biological role, involved in DNA repair and RecF pathway recombination. This is DNA repair protein RecO from Mycobacterium ulcerans (strain Agy99).